Consider the following 277-residue polypeptide: MGIKKFKPTTNGRRNMTGSDFAEITKTKPEKSLLVSKSKTAGRNAYGRITVRHRGGGHKRKYRLIDFKRVKDNVPATVKAIEYDPNRSANIALLVYADGVKSYILAPKGLKVGQVVESGKDVDIKVGNTLPLANIPVGTVIHNIELKPGKGGQLVRSAGTSAQLLGKEGKYAIIRLTSGEVRMILVTCRATIGAVGNEQHELIKVGKAGRARWAGKRPQSRGSVMNPNDHPHGGGEGKAPVGRPSPMSPWGKKTTGLKTRSKKARSNKFIVRSRNKK.

Composition is skewed to basic residues over residues 210–219 (RARWAGKRPQ) and 259–277 (TRSKKARSNKFIVRSRNKK). A disordered region spans residues 210-277 (RARWAGKRPQ…KFIVRSRNKK (68 aa)).

It belongs to the universal ribosomal protein uL2 family. As to quaternary structure, part of the 50S ribosomal subunit. Forms a bridge to the 30S subunit in the 70S ribosome.

One of the primary rRNA binding proteins. Required for association of the 30S and 50S subunits to form the 70S ribosome, for tRNA binding and peptide bond formation. It has been suggested to have peptidyltransferase activity; this is somewhat controversial. Makes several contacts with the 16S rRNA in the 70S ribosome. The chain is Large ribosomal subunit protein uL2 from Ligilactobacillus salivarius (strain UCC118) (Lactobacillus salivarius).